A 350-amino-acid chain; its full sequence is 26S proteasome non-ATPase regulatory subunit 8 (350 aa).

The tract at residues 1 to 24 (MFIKGRAPRAPPRERRRATRGGLR) is disordered. Ser-106 is modified (phosphoserine). The PCI domain maps to 162–331 (PSFERYMAQL…QQKPEDTTIP (170 aa)). Residue Lys-297 forms a Glycyl lysine isopeptide (Lys-Gly) (interchain with G-Cter in SUMO2) linkage.

Belongs to the proteasome subunit S14 family. In terms of assembly, component of the 19S proteasome regulatory particle complex. The 26S proteasome consists of a 20S core particle (CP) and two 19S regulatory subunits (RP). The regulatory particle is made of a lid composed of 9 subunits including PSMD8, a base containing 6 ATPases and few additional components. Interacts with DDI2. Interacts with TASOR.

In terms of biological role, component of the 26S proteasome, a multiprotein complex involved in the ATP-dependent degradation of ubiquitinated proteins. This complex plays a key role in the maintenance of protein homeostasis by removing misfolded or damaged proteins, which could impair cellular functions, and by removing proteins whose functions are no longer required. Therefore, the proteasome participates in numerous cellular processes, including cell cycle progression, apoptosis, or DNA damage repair. This Homo sapiens (Human) protein is 26S proteasome non-ATPase regulatory subunit 8 (PSMD8).